The primary structure comprises 212 residues: Ropporin-1 (212 aa).

Residues 12–43 (PELPELLKQFTKAAIRSQPQDLIQWAAEYFGA) form the RIIa domain. Serine 56 is modified (phosphoserine). Residues 209 to 212 (VRLE) are interaction with RHPN1.

It belongs to the ropporin family. Homodimer. Interacts with AKAP3. May interact with SPA17. Interacts with RHPN1. Interacts with FSCB; the interaction increases upon spermatozoa capacitation conditions. Interacts with CFAP61. Sumoylated, sumoylation decreases upon spermatozoa capacitation conditions.

It localises to the cell projection. The protein resides in the cilium. Its subcellular location is the flagellum. Important for male fertility. With ROPN1L, involved in fibrous sheath integrity and sperm motility, plays a role in PKA-dependent signaling processes required for spermatozoa capacitation. This Bos taurus (Bovine) protein is Ropporin-1 (ROPN1).